Here is a 693-residue protein sequence, read N- to C-terminus: tRNA (guanine(37)-N(1))-methyltransferase (693 aa).

S-adenosyl-L-methionine contacts are provided by residues arginine 327, 365 to 366 (DI), and 392 to 393 (DA). The tract at residues 497 to 572 (AGDSHQSNSH…QKAEDAPTNE (76 aa)) is disordered. Over residues 500-512 (SHQSNSHQSNPHE) the composition is skewed to low complexity. Asparagine 591 is a binding site for S-adenosyl-L-methionine.

This sequence belongs to the class I-like SAM-binding methyltransferase superfamily. TRM5/TYW2 family. Monomer.

It localises to the mitochondrion matrix. The protein resides in the nucleus. The protein localises to the cytoplasm. The catalysed reaction is guanosine(37) in tRNA + S-adenosyl-L-methionine = N(1)-methylguanosine(37) in tRNA + S-adenosyl-L-homocysteine + H(+). Functionally, specifically methylates the N1 position of guanosine-37 in various cytoplasmic and mitochondrial tRNAs. Methylation is not dependent on the nature of the nucleoside 5' of the target nucleoside. This is the first step in the biosynthesis of wybutosine (yW), a modified base adjacent to the anticodon of tRNAs and required for accurate decoding. This is tRNA (guanine(37)-N(1))-methyltransferase from Plasmodium vivax (strain Salvador I).